The sequence spans 393 residues: tRNA(Met) cytidine acetate ligase (393 aa).

ATP contacts are provided by glycine 81, asparagine 142, and arginine 167.

This sequence belongs to the TmcAL family.

The protein localises to the cytoplasm. It catalyses the reaction cytidine(34) in elongator tRNA(Met) + acetate + ATP = N(4)-acetylcytidine(34) in elongator tRNA(Met) + AMP + diphosphate. Functionally, catalyzes the formation of N(4)-acetylcytidine (ac(4)C) at the wobble position of elongator tRNA(Met), using acetate and ATP as substrates. First activates an acetate ion to form acetyladenylate (Ac-AMP) and then transfers the acetyl group to tRNA to form ac(4)C34. This is tRNA(Met) cytidine acetate ligase from Bacillus cytotoxicus (strain DSM 22905 / CIP 110041 / 391-98 / NVH 391-98).